A 156-amino-acid polypeptide reads, in one-letter code: Large ribosomal subunit protein uL15 (156 aa).

Positions 1–11 (MKLNDLRDKPG) are enriched in basic and acidic residues. The disordered stretch occupies residues 1 to 44 (MKLNDLRDKPGSVKARKRVGRGIGSGTGKTGGRGVKGQKSRSGV). Residues 21–35 (RGIGSGTGKTGGRGV) are compositionally biased toward gly residues.

It belongs to the universal ribosomal protein uL15 family. In terms of assembly, part of the 50S ribosomal subunit.

Its function is as follows. Binds to the 23S rRNA. The chain is Large ribosomal subunit protein uL15 from Brucella abortus (strain S19).